A 377-amino-acid chain; its full sequence is Nitric oxide reductase FlRd-NAD(+) reductase (377 aa).

This sequence belongs to the FAD-dependent oxidoreductase family. FAD serves as cofactor.

It localises to the cytoplasm. It catalyses the reaction 2 reduced [nitric oxide reductase rubredoxin domain] + NAD(+) + H(+) = 2 oxidized [nitric oxide reductase rubredoxin domain] + NADH. Its pathway is nitrogen metabolism; nitric oxide reduction. Functionally, one of at least two accessory proteins for anaerobic nitric oxide (NO) reductase. Reduces the rubredoxin moiety of NO reductase. The chain is Nitric oxide reductase FlRd-NAD(+) reductase from Salmonella schwarzengrund (strain CVM19633).